A 40-amino-acid chain; its full sequence is Allophycocyanin alpha-B chain (40 aa).

The protein belongs to the phycobiliprotein family. As to quaternary structure, heterodimer of an alpha and a beta chain. Post-translationally, contains one covalently linked bilin chromophore.

Its subcellular location is the cellular thylakoid membrane. Light-harvesting photosynthetic bile pigment-protein from the phycobiliprotein complex. Allophycocyanin has a maximum absorption at approximately 650 nanometers. The polypeptide is Allophycocyanin alpha-B chain (Mastigocladus laminosus (Fischerella sp.)).